Reading from the N-terminus, the 96-residue chain is Co-chaperonin GroES (96 aa).

This sequence belongs to the GroES chaperonin family. As to quaternary structure, heptamer of 7 subunits arranged in a ring. Interacts with the chaperonin GroEL.

It is found in the cytoplasm. Its function is as follows. Together with the chaperonin GroEL, plays an essential role in assisting protein folding. The GroEL-GroES system forms a nano-cage that allows encapsulation of the non-native substrate proteins and provides a physical environment optimized to promote and accelerate protein folding. GroES binds to the apical surface of the GroEL ring, thereby capping the opening of the GroEL channel. The sequence is that of Co-chaperonin GroES from Coxiella burnetii (strain Dugway 5J108-111).